Here is a 392-residue protein sequence, read N- to C-terminus: 8-amino-7-oxononanoate synthase (392 aa).

Residue Arg19 participates in substrate binding. 106–107 serves as a coordination point for pyridoxal 5'-phosphate; it reads GY. His131 provides a ligand contact to substrate. Ser176, His204, and Thr233 together coordinate pyridoxal 5'-phosphate. Lys236 bears the N6-(pyridoxal phosphate)lysine mark. Residue Thr350 coordinates substrate.

Belongs to the class-II pyridoxal-phosphate-dependent aminotransferase family. BioF subfamily. Homodimer. It depends on pyridoxal 5'-phosphate as a cofactor.

The enzyme catalyses 6-carboxyhexanoyl-[ACP] + L-alanine + H(+) = (8S)-8-amino-7-oxononanoate + holo-[ACP] + CO2. Its pathway is cofactor biosynthesis; biotin biosynthesis. Its function is as follows. Catalyzes the decarboxylative condensation of pimeloyl-[acyl-carrier protein] and L-alanine to produce 8-amino-7-oxononanoate (AON), [acyl-carrier protein], and carbon dioxide. The chain is 8-amino-7-oxononanoate synthase from Stutzerimonas stutzeri (strain A1501) (Pseudomonas stutzeri).